A 236-amino-acid chain; its full sequence is MAATLLDVCAVVPAAGFGRRMQTECPKQYLSIGNKTILEHSVHALLAHPRVTRVVIAISPGDHRFAQLPLANHPQITVVDGGNERADSVLAGLQAVAKAQWVLVHDAARPCLHQDDLARLLAISENSRVGGILASPVRDTMKRGEPGKNAIAHTVERADLWHALTPQFFPRELLYDCLTRALNEGATITDEASALEYCGFHPALVEGRADNIKVTRPEDLALAEFYLTRTIHQEKA.

It belongs to the IspD/TarI cytidylyltransferase family. IspD subfamily. In terms of assembly, homodimer.

The catalysed reaction is 2-C-methyl-D-erythritol 4-phosphate + CTP + H(+) = 4-CDP-2-C-methyl-D-erythritol + diphosphate. It functions in the pathway isoprenoid biosynthesis; isopentenyl diphosphate biosynthesis via DXP pathway; isopentenyl diphosphate from 1-deoxy-D-xylulose 5-phosphate: step 2/6. In terms of biological role, catalyzes the formation of 4-diphosphocytidyl-2-C-methyl-D-erythritol from CTP and 2-C-methyl-D-erythritol 4-phosphate (MEP). The sequence is that of 2-C-methyl-D-erythritol 4-phosphate cytidylyltransferase from Salmonella typhimurium (strain LT2 / SGSC1412 / ATCC 700720).